A 194-amino-acid chain; its full sequence is uncharacterized protein (194 aa).

One can recognise an SIS domain in the interval 34–192 (VMQCLLGGNK…CELVDQTLFP (159 aa)).

The protein belongs to the SIS family. DiaA subfamily.

This is an uncharacterized protein from Haemophilus influenzae (strain ATCC 51907 / DSM 11121 / KW20 / Rd).